A 386-amino-acid polypeptide reads, in one-letter code: Methionine aminopeptidase 1 (386 aa).

Ala2 carries the post-translational modification N-acetylalanine. Residues 6 to 59 (TRVCETDGCSSEAKLQCPTCIKLGIQGSYFCSQECFKGSWATHKLLHKKAKDEK) form a C6H2-type zinc finger. 8 residues coordinate Zn(2+): Cys9, Cys14, Cys22, Cys25, Cys36, Cys40, His48, and His52. A protein is bound at residue His203. Zn(2+)-binding residues include Asp220, Asp231, and His294. Residue His301 coordinates a protein. Zn(2+) is bound by residues Glu327 and Glu358.

The protein belongs to the peptidase M24A family. Methionine aminopeptidase type 1 subfamily. Associates with the 60S ribosomal subunit of the 80S translational complex. The cofactor is Zn(2+). Requires Co(2+) as cofactor. Mn(2+) is required as a cofactor. Fe(2+) serves as cofactor.

The protein localises to the cytoplasm. It catalyses the reaction Release of N-terminal amino acids, preferentially methionine, from peptides and arylamides.. Its function is as follows. Cotranslationally removes the N-terminal methionine from nascent proteins. The N-terminal methionine is often cleaved when the second residue in the primary sequence is small and uncharged (Met-Ala-, Cys, Gly, Pro, Ser, Thr, or Val). This is Methionine aminopeptidase 1 (METAP1) from Pongo abelii (Sumatran orangutan).